A 407-amino-acid polypeptide reads, in one-letter code: Immunoglobulin superfamily member 5 (407 aa).

At 1 to 266 (MGQKERSTAD…LGFSLPTWGK (266 aa)) the chain is on the extracellular side. 2 Ig-like V-type domains span residues 39–139 (NEVI…LTVQ) and 142–231 (GELF…ATVN). Asparagine 59, asparagine 103, asparagine 210, and asparagine 231 each carry an N-linked (GlcNAc...) asparagine glycan. 2 cysteine pairs are disulfide-bonded: cysteine 60/cysteine 123 and cysteine 163/cysteine 215. Residues 267 to 285 (VGLGLAGTMLLTPTCTLTI) form a helical membrane-spanning segment. The Cytoplasmic segment spans residues 286 to 407 (RCCCCRRRCC…PEKVSNTTVV (122 aa)). Residues 320–331 (KSEKEKTNKETE) are compositionally biased toward basic and acidic residues. Positions 320-407 (KSEKEKTNKE…PEKVSNTTVV (88 aa)) are disordered. Positions 389–407 (PQASFNLASPEKVSNTTVV) are enriched in polar residues.

The protein belongs to the immunoglobulin superfamily. In terms of assembly, interacts with MAGI1 at tight junctions, forms a tripartite complex with NPHS1. Interacts with LNX1 isoform 2 via its PDZ 2 domain, it may also interact with other isoforms containing this domain.

It is found in the apical cell membrane. The protein localises to the cell junction. Its subcellular location is the tight junction. In terms of biological role, provides, together with MAGI1, an adhesion machinery at tight junctions, which may regulate the permeability of kidney glomerulus and small intestinal epithelial cells. Mediates calcium-independent homophilic cell adhesion. In testis, it may function as a cell adhesion molecule rather than a tight-junction protein. It may participate in the adhesion between spermatogonia-spermatogonia, spermatogonia-Sertoli cells, and Sertoli cells-Sertoli cells. This is Immunoglobulin superfamily member 5 (IGSF5) from Homo sapiens (Human).